The primary structure comprises 1446 residues: DNA-directed RNA polymerase subunit beta'' (1446 aa).

Zn(2+) is bound by residues Cys217, Cys285, Cys292, and Cys295.

It belongs to the RNA polymerase beta' chain family. RpoC2 subfamily. As to quaternary structure, in plastids the minimal PEP RNA polymerase catalytic core is composed of four subunits: alpha, beta, beta', and beta''. When a (nuclear-encoded) sigma factor is associated with the core the holoenzyme is formed, which can initiate transcription. The cofactor is Zn(2+).

Its subcellular location is the plastid. It is found in the chloroplast. The enzyme catalyses RNA(n) + a ribonucleoside 5'-triphosphate = RNA(n+1) + diphosphate. In terms of biological role, DNA-dependent RNA polymerase catalyzes the transcription of DNA into RNA using the four ribonucleoside triphosphates as substrates. This is DNA-directed RNA polymerase subunit beta'' from Thalassiosira pseudonana (Marine diatom).